The primary structure comprises 508 residues: ATP synthase subunit alpha, chloroplastic (508 aa).

170–177 (GDRQTGKT) serves as a coordination point for ATP.

This sequence belongs to the ATPase alpha/beta chains family. F-type ATPases have 2 components, F(1) - the catalytic core - and F(0) - the membrane proton channel. F(1) has five subunits: alpha(3), beta(3), gamma(1), delta(1), epsilon(1). F(0) has four main subunits: a(1), b(1), b'(1) and c(10-14). The alpha and beta chains form an alternating ring which encloses part of the gamma chain. F(1) is attached to F(0) by a central stalk formed by the gamma and epsilon chains, while a peripheral stalk is formed by the delta, b and b' chains.

It localises to the plastid. The protein resides in the chloroplast thylakoid membrane. The catalysed reaction is ATP + H2O + 4 H(+)(in) = ADP + phosphate + 5 H(+)(out). Its function is as follows. F(1)F(0) ATP synthase produces ATP from ADP in the presence of a proton or sodium gradient. F-type ATPases consist of two structural domains, F(1) containing the extramembraneous catalytic core and F(0) containing the membrane proton channel, linked together by a central stalk and a peripheral stalk. During catalysis, ATP synthesis in the catalytic domain of F(1) is coupled via a rotary mechanism of the central stalk subunits to proton translocation. In terms of biological role, the alpha chain is a regulatory subunit. This is ATP synthase subunit alpha, chloroplastic from Chlamydomonas reinhardtii (Chlamydomonas smithii).